Consider the following 275-residue polypeptide: NH(3)-dependent NAD(+) synthetase (275 aa).

50–57 (GISGGVDS) serves as a coordination point for ATP. Asp-56 provides a ligand contact to Mg(2+). Arg-147 lines the deamido-NAD(+) pocket. Thr-167 provides a ligand contact to ATP. Position 172 (Glu-172) interacts with Mg(2+). The deamido-NAD(+) site is built by Lys-180 and Asp-187. The ATP site is built by Lys-196 and Thr-218. 267–268 (HK) contributes to the deamido-NAD(+) binding site.

The protein belongs to the NAD synthetase family. Homodimer.

The catalysed reaction is deamido-NAD(+) + NH4(+) + ATP = AMP + diphosphate + NAD(+) + H(+). It participates in cofactor biosynthesis; NAD(+) biosynthesis; NAD(+) from deamido-NAD(+) (ammonia route): step 1/1. Its function is as follows. Catalyzes the ATP-dependent amidation of deamido-NAD to form NAD. Uses ammonia as a nitrogen source. This Pseudomonas savastanoi pv. phaseolicola (strain 1448A / Race 6) (Pseudomonas syringae pv. phaseolicola (strain 1448A / Race 6)) protein is NH(3)-dependent NAD(+) synthetase.